We begin with the raw amino-acid sequence, 433 residues long: DNA polymerase processivity factor (433 aa).

The interval 274–433 (RGDPFDKNYV…VPNTKKQKCG (160 aa)) is disordered. Positions 298–307 (SLSSLANAGG) are enriched in low complexity. 2 stretches are compositionally biased toward gly residues: residues 325 to 336 (GLGGLGGGGGGG) and 344 to 359 (GGGG…GGGG). The segment covering 360 to 376 (GDHDHGLSSKEKYEQHK) has biased composition (basic and acidic residues). The segment covering 385–398 (GGSGGGGGGGGGGL) has biased composition (gly residues).

The protein belongs to the herpesviridae polymerase accessory protein family. As to quaternary structure, forms homodimers. Interacts with host SMARCB1. Interacts with host NCL/nucleolin; this interaction is important for the organization of proteins within viral replication compartments. Interacts with UL112/UL113; this interaction is necessary for efficient viral DNA replication. Interacts with UL84. Interacts with the uracil DNA glycosylase UL114. Interacts with the DNA polymerase catalytic subunit UL54. Interacts with host IRF3. Interacts with host RELA. Phosphorylated by UL97 on serine residues, phosphorylation seems important for UL44 nuclear entry but does not directly affect its role in replication. In terms of processing, sumoylated. Sumoylation on Lys-410 increases viral DNA replication.

It localises to the virion. The protein resides in the host nucleus. Its function is as follows. Accessory subunit of the DNA polymerase that plays an essential role in viral DNA replication and acts by increasing the processivity of polymerization. Forms dimers that binds to double-stranded DNA and UL54 specifically to stimulates long chain DNA synthesis efficiently. Plays an important role in maintaining the structure of viral replication compartments by interacting with host nucleolin/NUC. In addition, suppresses innate immune responses through effects on host IRF3 and NF-kappa-B. Mechanistically, interfere with the binding of IRF3 and the p65 NF-kappa-B subunit to the promoters of antiviral genes, thereby inhibiting the expression of these genes. The sequence is that of DNA polymerase processivity factor (UL44) from Human cytomegalovirus (strain Merlin) (HHV-5).